Reading from the N-terminus, the 412-residue chain is MSNENSAVTKHAGVKKVVLAYSGGLDTSAIIPWLKETYDDCEIIAFCADVGQGDAELEGLYEKAIASGASECHIVDLKEELVADYIYPTIATGAIYEGTYLLGTSMARPIIAKAQVEVARKVGADAVCHGCTGKGNDQVRFEGCFAALAPDLKVIAPWREWEMVSREDLLDYLAERNIATSASATKIYSRDANAWHISHEGGELEDPWNEPSKGVWTMTVAPEDAPNQPEYVALELEQGKITKVNGEALSPYNALMLLNEVAGAHGVGRIDITENRLVGMKSRGCYETPGGTVMFAALRAIEELVLDKTSREWREQIGTKMAHLVYDGRWFTPLCESLLGASKPLADLINGEVVVKLYKGQASVVKKRSPNSLYSEAFATFGADDVYNQKDAEGFIRLYSLSSRIRALNNQK.

ATP-binding positions include alanine 20–serine 28 and alanine 48. L-citrulline-binding residues include tyrosine 100 and serine 105. Residue glycine 130 coordinates ATP. L-aspartate contacts are provided by threonine 132, asparagine 136, and aspartate 137. Asparagine 136 lines the L-citrulline pocket. L-citrulline contacts are provided by arginine 140, serine 189, serine 198, glutamate 274, and tyrosine 286.

The protein belongs to the argininosuccinate synthase family. Type 1 subfamily. In terms of assembly, homotetramer.

The protein localises to the cytoplasm. It carries out the reaction L-citrulline + L-aspartate + ATP = 2-(N(omega)-L-arginino)succinate + AMP + diphosphate + H(+). It participates in amino-acid biosynthesis; L-arginine biosynthesis; L-arginine from L-ornithine and carbamoyl phosphate: step 2/3. The protein is Argininosuccinate synthase of Shewanella halifaxensis (strain HAW-EB4).